A 339-amino-acid chain; its full sequence is DNA-directed RNA polymerase subunit alpha (339 aa).

The tract at residues 1 to 233 (MVREEVAGST…DLFLPFLHAE (233 aa)) is alpha N-terminal domain (alpha-NTD). Residues 264–339 (KKGIPLNCIF…IDLLKNKLSF (76 aa)) form an alpha C-terminal domain (alpha-CTD) region.

The protein belongs to the RNA polymerase alpha chain family. In plastids the minimal PEP RNA polymerase catalytic core is composed of four subunits: alpha, beta, beta', and beta''. When a (nuclear-encoded) sigma factor is associated with the core the holoenzyme is formed, which can initiate transcription.

Its subcellular location is the plastid. It is found in the chloroplast. It catalyses the reaction RNA(n) + a ribonucleoside 5'-triphosphate = RNA(n+1) + diphosphate. In terms of biological role, DNA-dependent RNA polymerase catalyzes the transcription of DNA into RNA using the four ribonucleoside triphosphates as substrates. In Thinopyrum bessarabicum (Wheatgrass), this protein is DNA-directed RNA polymerase subunit alpha.